We begin with the raw amino-acid sequence, 540 residues long: Sensory neuron membrane protein 1 (540 aa).

At 1-105 (MRTDDPVIGN…WIFRPDLSKP (105 aa)) the chain is on the cytoplasmic side. Residues 106-126 (LTGDEMITIPHPLILGALLMV) traverse the membrane as a helical segment. Residues 127-436 (QRDREAMMPL…YTLFLGLRFN (310 aa)) lie on the Extracellular side of the membrane. N193 and N206 each carry an N-linked (GlcNAc...) asparagine glycan. Cystine bridges form between C245/C310, C274/C330, and C312/C319. N418 carries N-linked (GlcNAc...) asparagine glycosylation. The helical transmembrane segment at 437–457 (TAVKWLTIIIGTIGTIVGGFM) threads the bilayer. The Cytoplasmic portion of the chain corresponds to 458-540 (HYKRTTKMVN…VTVTEMQERY (83 aa)).

This sequence belongs to the CD36 family.

The protein localises to the cell membrane. Functionally, plays an olfactory role that is not restricted to pheromone sensitivity. This chain is Sensory neuron membrane protein 1, found in Aedes aegypti (Yellowfever mosquito).